The sequence spans 66 residues: DNA-binding protein 7d (66 aa).

An N6-methyllysine; partial mark is found at lysine 5 and lysine 7.

It belongs to the 7 kDa DNA-binding/endoribonuclease P2 family. Monomer. Post-translationally, lys-5 was 70% monomethylated in form 7a, 25% in form 7b, and 20% in form 7d. Lys-7 was 50% monomethylated in form 7a, 40% in form 7b, and 50% in form 7d.

It localises to the cytoplasm. Can constrain negative DNA supercoils. May be involved in maintaining the integrity of the genome at high temperature. The protein is DNA-binding protein 7d of Sulfolobus acidocaldarius (strain ATCC 33909 / DSM 639 / JCM 8929 / NBRC 15157 / NCIMB 11770).